The sequence spans 300 residues: Haloalkane dehalogenase 1 (300 aa).

In terms of domain architecture, AB hydrolase-1 spans 47-176 (PPIVLLHGEP…FARYSPVLPA (130 aa)). The active-site Nucleophile is the Asp-123. Asp-250 (proton donor) is an active-site residue. The active-site Proton acceptor is the His-279.

This sequence belongs to the haloalkane dehalogenase family. Type 1 subfamily. In terms of assembly, monomer.

The enzyme catalyses 1-haloalkane + H2O = a halide anion + a primary alcohol + H(+). Its function is as follows. Catalyzes hydrolytic cleavage of carbon-halogen bonds in halogenated aliphatic compounds, leading to the formation of the corresponding primary alcohols, halide ions and protons. The sequence is that of Haloalkane dehalogenase 1 (dhmA1) from Mycobacterium bovis (strain ATCC BAA-935 / AF2122/97).